The following is a 94-amino-acid chain: Integration host factor subunit beta (94 aa).

The protein belongs to the bacterial histone-like protein family. As to quaternary structure, heterodimer of an alpha and a beta chain.

Functionally, this protein is one of the two subunits of integration host factor, a specific DNA-binding protein that functions in genetic recombination as well as in transcriptional and translational control. In Dechloromonas aromatica (strain RCB), this protein is Integration host factor subunit beta.